Consider the following 185-residue polypeptide: Threonylcarbamoyl-AMP synthase (185 aa).

A YrdC-like domain is found at 5-185 (NWRVRLAARI…RDGRTGQRLR (181 aa)).

It belongs to the SUA5 family. TsaC subfamily.

The protein resides in the cytoplasm. It catalyses the reaction L-threonine + hydrogencarbonate + ATP = L-threonylcarbamoyladenylate + diphosphate + H2O. Functionally, required for the formation of a threonylcarbamoyl group on adenosine at position 37 (t(6)A37) in tRNAs that read codons beginning with adenine. Catalyzes the conversion of L-threonine, HCO(3)(-)/CO(2) and ATP to give threonylcarbamoyl-AMP (TC-AMP) as the acyladenylate intermediate, with the release of diphosphate. The chain is Threonylcarbamoyl-AMP synthase from Nitrosococcus oceani (strain ATCC 19707 / BCRC 17464 / JCM 30415 / NCIMB 11848 / C-107).